The primary structure comprises 693 residues: Elongation factor G (693 aa).

One can recognise a tr-type G domain in the interval 8-282 (EKTRNIGIMA…AVIDYLPSPL (275 aa)). Residues 17–24 (AHVDAGKT), 81–85 (DTPGH), and 135–138 (NKMD) contribute to the GTP site.

The protein belongs to the TRAFAC class translation factor GTPase superfamily. Classic translation factor GTPase family. EF-G/EF-2 subfamily.

Its subcellular location is the cytoplasm. In terms of biological role, catalyzes the GTP-dependent ribosomal translocation step during translation elongation. During this step, the ribosome changes from the pre-translocational (PRE) to the post-translocational (POST) state as the newly formed A-site-bound peptidyl-tRNA and P-site-bound deacylated tRNA move to the P and E sites, respectively. Catalyzes the coordinated movement of the two tRNA molecules, the mRNA and conformational changes in the ribosome. The protein is Elongation factor G of Streptococcus pneumoniae (strain Hungary19A-6).